Reading from the N-terminus, the 361-residue chain is Chorismate synthase (361 aa).

The NADP(+) site is built by arginine 48 and arginine 54. Residues 131 to 133 (RSS), 243 to 244 (NA), glycine 287, 302 to 306 (KPTSS), and arginine 328 each bind FMN.

This sequence belongs to the chorismate synthase family. In terms of assembly, homotetramer. Requires FMNH2 as cofactor.

It carries out the reaction 5-O-(1-carboxyvinyl)-3-phosphoshikimate = chorismate + phosphate. Its pathway is metabolic intermediate biosynthesis; chorismate biosynthesis; chorismate from D-erythrose 4-phosphate and phosphoenolpyruvate: step 7/7. In terms of biological role, catalyzes the anti-1,4-elimination of the C-3 phosphate and the C-6 proR hydrogen from 5-enolpyruvylshikimate-3-phosphate (EPSP) to yield chorismate, which is the branch point compound that serves as the starting substrate for the three terminal pathways of aromatic amino acid biosynthesis. This reaction introduces a second double bond into the aromatic ring system. The sequence is that of Chorismate synthase from Rhodopseudomonas palustris (strain HaA2).